Consider the following 785-residue polypeptide: MEKKVEAILEFDKIKKQLTEFASSSLGEQAILELAPATDFQVVQKTQLETEEGAKIIRLRGSAPITGLTDVFAHLKRLEIGGDLNGLEIYQIGSNLRVSRQMKNFMNDLLEIGVELPLLGALSDELLVLKEVEEDIAISVDESGKVLDTASEALSTIRRTLRRTEDRVREKLESYLRDRNASKMLSDAVITIRNDRYVIPVKQEYKGHYGGIVHDQSASGQTLFIEPQSVVDLNNERKALQAKEKQEIERILAEISASLAAWINEIHHNTFILGRFDFIFAKARFGKAMKAVTPHLSDAGVVHLIAARHPLLDAAKVVANDIYLGEDFTTIVITGPNTGGKTITLKTLGLLTLMAQSGLQIPAQEDSTIAVFEHVFADIGDEQSIEQSLSTFSSHMTNIVSILGNVNQKSLILYDELGAGTDPQEGAALAIAILDASHAKGASVVATTHYPELKAYGYNRVHATNASVEFNVETLSPTYKLLIGVPGRSNAFDISRRLGLSENIITEARSLVDTESADLNDMISSLEEKRNLAETEYEEARELARGAGNLLKDLQKEISNYYQQKDKLIEQASEKAATIVEKAEAEAEEIIHELRTMQLNGAAGIKEHELIDAKTRLGNAKPKTINKTIPQAPKQKPHVFQEGDNVRVLSLGQKGTLLNKISDKEWNVQIGIIKMKIKTVDLEYIQPEKPKKQRIITSVHSSGSPAKSELDLRGERYEDALQKVDKYLDEALLAGYPQVAIIHGKGTGALRTGVTEYLKNHRMVKSIRFGAAAEGGNGVTIVEFK.

Residue 335-342 (GPNTGGKT) participates in ATP binding. The 76-residue stretch at 710-785 (LDLRGERYED…GNGVTIVEFK (76 aa)) folds into the Smr domain.

The protein belongs to the DNA mismatch repair MutS family. MutS2 subfamily. Homodimer. Binds to stalled ribosomes, contacting rRNA.

Its function is as follows. Endonuclease that is involved in the suppression of homologous recombination and thus may have a key role in the control of bacterial genetic diversity. In terms of biological role, acts as a ribosome collision sensor, splitting the ribosome into its 2 subunits. Detects stalled/collided 70S ribosomes which it binds and splits by an ATP-hydrolysis driven conformational change. Acts upstream of the ribosome quality control system (RQC), a ribosome-associated complex that mediates the extraction of incompletely synthesized nascent chains from stalled ribosomes and their subsequent degradation. Probably generates substrates for RQC. The polypeptide is Endonuclease MutS2 (Listeria monocytogenes serotype 4b (strain F2365)).